The following is a 445-amino-acid chain: Phosphoglucosamine mutase (445 aa).

Catalysis depends on S104, which acts as the Phosphoserine intermediate. Mg(2+) is bound by residues S104, D243, D245, and D247. Residue S104 is modified to Phosphoserine.

It belongs to the phosphohexose mutase family. Requires Mg(2+) as cofactor. Activated by phosphorylation.

The enzyme catalyses alpha-D-glucosamine 1-phosphate = D-glucosamine 6-phosphate. In terms of biological role, catalyzes the conversion of glucosamine-6-phosphate to glucosamine-1-phosphate. The protein is Phosphoglucosamine mutase of Neisseria subflava.